A 436-amino-acid chain; its full sequence is Serine--tRNA ligase (436 aa).

242–244 provides a ligand contact to L-serine; it reads TAE. Residue 273–275 participates in ATP binding; the sequence is RSE. Position 296 (Glu296) interacts with L-serine. An ATP-binding site is contributed by 360–363; that stretch reads EISS. Ser395 is a binding site for L-serine.

The protein belongs to the class-II aminoacyl-tRNA synthetase family. Type-1 seryl-tRNA synthetase subfamily. As to quaternary structure, homodimer. The tRNA molecule binds across the dimer.

It localises to the cytoplasm. It catalyses the reaction tRNA(Ser) + L-serine + ATP = L-seryl-tRNA(Ser) + AMP + diphosphate + H(+). The enzyme catalyses tRNA(Sec) + L-serine + ATP = L-seryl-tRNA(Sec) + AMP + diphosphate + H(+). The protein operates within aminoacyl-tRNA biosynthesis; selenocysteinyl-tRNA(Sec) biosynthesis; L-seryl-tRNA(Sec) from L-serine and tRNA(Sec): step 1/1. Catalyzes the attachment of serine to tRNA(Ser). Is also able to aminoacylate tRNA(Sec) with serine, to form the misacylated tRNA L-seryl-tRNA(Sec), which will be further converted into selenocysteinyl-tRNA(Sec). The chain is Serine--tRNA ligase from Polynucleobacter asymbioticus (strain DSM 18221 / CIP 109841 / QLW-P1DMWA-1) (Polynucleobacter necessarius subsp. asymbioticus).